Consider the following 507-residue polypeptide: Cytochrome P450 4X1 (507 aa).

A helical transmembrane segment spans residues Leu-14–Leu-34. Position 452 (Cys-452) interacts with heme.

This sequence belongs to the cytochrome P450 family. Heme serves as cofactor. In terms of tissue distribution, expressed in brain and aorta. In the brain, expressed in the Purkinje cells of the cerebellum, pyramidal neurons in the dentate gyrus of the hippocampus, cortical forebrain neurons and those of brain stem nuclei (at protein level). In addition to neurons, also expressed in cerebral vascular endothelial cells (at protein level). Also expressed in epithelial cells of the choroid plexus (at protein level). Hardly detectable in heart, lung, kidney and spleen.

Its subcellular location is the endoplasmic reticulum membrane. The protein resides in the microsome membrane. The catalysed reaction is N-(5Z,8Z,11Z,14Z-eicosatetraenoyl)-ethanolamine + reduced [NADPH--hemoprotein reductase] + O2 = N-(14,15-epoxy-5Z,8Z,11Z-eicosatrienoyl)-ethanolamine + oxidized [NADPH--hemoprotein reductase] + H2O + H(+). In terms of biological role, a cytochrome P450 monooxygenase that selectively catalyzes the epoxidation of the last double bond of the arachidonoyl moiety of anandamide, potentially modulating endocannabinoid signaling. Has no hydroxylase activity toward various fatty acids, steroids and prostaglandins. Mechanistically, uses molecular oxygen inserting one oxygen atom into a substrate, and reducing the second into a water molecule, with two electrons provided by NADPH via cytochrome P450 reductase (CPR; NADPH-ferrihemoprotein reductase). The polypeptide is Cytochrome P450 4X1 (Mus musculus (Mouse)).